Here is an 865-residue protein sequence, read N- to C-terminus: Leucine--tRNA ligase (865 aa).

The 'HIGH' region signature appears at 41–51 (PYPSGRIHMGH). The 'KMSKS' region signature appears at 614–618 (KMSKS). Residue lysine 617 coordinates ATP.

It belongs to the class-I aminoacyl-tRNA synthetase family.

Its subcellular location is the cytoplasm. It carries out the reaction tRNA(Leu) + L-leucine + ATP = L-leucyl-tRNA(Leu) + AMP + diphosphate. This is Leucine--tRNA ligase from Rhodospirillum centenum (strain ATCC 51521 / SW).